The following is a 120-amino-acid chain: uncharacterized protein (120 aa).

Positions 1–19 (MKKIVCAVVALLLTLPAWA) are cleaved as a signal peptide.

This is an uncharacterized protein from Salmonella typhimurium (strain LT2 / SGSC1412 / ATCC 700720).